We begin with the raw amino-acid sequence, 505 residues long: Glutamate--tRNA ligase (505 aa).

The 'HIGH' region signature appears at 12–22 (PSPTGDPHVGT). The 'KMSKS' region signature appears at 253 to 257 (KLSKR). K256 provides a ligand contact to ATP.

The protein belongs to the class-I aminoacyl-tRNA synthetase family. Glutamate--tRNA ligase type 1 subfamily. Monomer.

It is found in the cytoplasm. The enzyme catalyses tRNA(Glu) + L-glutamate + ATP = L-glutamyl-tRNA(Glu) + AMP + diphosphate. Its function is as follows. Catalyzes the attachment of glutamate to tRNA(Glu) in a two-step reaction: glutamate is first activated by ATP to form Glu-AMP and then transferred to the acceptor end of tRNA(Glu). This chain is Glutamate--tRNA ligase, found in Chlamydia abortus (strain DSM 27085 / S26/3) (Chlamydophila abortus).